The sequence spans 176 residues: Membrane-anchored junction protein (176 aa).

The Nuclear segment spans residues 1–151 (MSLKPFTYPF…QHNSPPPKER (151 aa)). The interval 59–150 (AVMRKRKHMD…LQHNSPPPKE (92 aa)) is disordered. A compositionally biased stretch (basic and acidic residues) spans 95 to 107 (PPVETRRNRERKT). The segment covering 108-120 (QQGLQETLASDIT) has biased composition (polar residues). A helical transmembrane segment spans residues 152 to 170 (AATGFFGFLSSLFPFRYFF). Residues 171-176 (RKSSHS) are Perinuclear space-facing.

This sequence belongs to the MAJIN family. Component of the MAJIN-TERB1-TERB2 complex, composed of MAJIN, TERB1 and TERB2.

Its subcellular location is the nucleus inner membrane. It is found in the chromosome. The protein resides in the telomere. In terms of biological role, meiosis-specific telomere-associated protein involved in meiotic telomere attachment to the nucleus inner membrane, a crucial step for homologous pairing and synapsis. Component of the MAJIN-TERB1-TERB2 complex, which promotes telomere cap exchange by mediating attachment of telomeric DNA to the inner nuclear membrane and replacement of the protective cap of telomeric chromosomes: in early meiosis, the MAJIN-TERB1-TERB2 complex associates with telomeric DNA and the shelterin/telosome complex. During prophase, the complex matures and promotes release of the shelterin/telosome complex from telomeric DNA. In the complex, MAJIN acts as the anchoring subunit to the nucleus inner membrane. MAJIN shows DNA-binding activity, possibly for the stabilization of telomere attachment on the nucleus inner membrane. The chain is Membrane-anchored junction protein from Homo sapiens (Human).